Here is a 185-residue protein sequence, read N- to C-terminus: Ribosome-recycling factor (185 aa).

Belongs to the RRF family.

It localises to the cytoplasm. Its function is as follows. Responsible for the release of ribosomes from messenger RNA at the termination of protein biosynthesis. May increase the efficiency of translation by recycling ribosomes from one round of translation to another. This Bacillus cytotoxicus (strain DSM 22905 / CIP 110041 / 391-98 / NVH 391-98) protein is Ribosome-recycling factor.